A 482-amino-acid polypeptide reads, in one-letter code: Pyruvate kinase (482 aa).

Arg-37 lines the substrate pocket. K(+) is bound by residues Asn-39, Ser-41, and Asp-71. Residue 39 to 42 participates in ATP binding; it reads NFSH. Residues Arg-78 and Lys-160 each coordinate ATP. Position 222 (Glu-222) interacts with Mg(2+). 3 residues coordinate substrate: Gly-245, Asp-246, and Thr-278. Asp-246 provides a ligand contact to Mg(2+).

The protein belongs to the pyruvate kinase family. Homotetramer. Mg(2+) is required as a cofactor. It depends on K(+) as a cofactor.

It catalyses the reaction pyruvate + ATP = phosphoenolpyruvate + ADP + H(+). It functions in the pathway carbohydrate degradation; glycolysis; pyruvate from D-glyceraldehyde 3-phosphate: step 5/5. The polypeptide is Pyruvate kinase (ttuE) (Agrobacterium vitis (Rhizobium vitis)).